The sequence spans 55 residues: Mannose/glucose-specific lectin alpha chain (55 aa).

The protein belongs to the leguminous lectin family. In terms of assembly, tetramer of two alpha and two beta chains.

In Lathyrus sativus (White vetchling), this protein is Mannose/glucose-specific lectin alpha chain.